The primary structure comprises 86 residues: uncharacterized protein (86 aa).

The chain crosses the membrane as a helical span at residues 4-24; it reads LFFTLIAFVAIILLMSIGFII.

The protein localises to the membrane. This is an uncharacterized protein from Haemophilus influenzae (strain ATCC 51907 / DSM 11121 / KW20 / Rd).